Here is a 247-residue protein sequence, read N- to C-terminus: uncharacterized protein (247 aa).

This is an uncharacterized protein from Cryphonectria parasitica (Chestnut blight fungus).